The sequence spans 384 residues: Isoafricanol synthase (384 aa).

Mg(2+) contacts are provided by aspartate 95, asparagine 245, serine 249, and glutamate 253.

Belongs to the terpene synthase family. Requires Mg(2+) as cofactor.

The catalysed reaction is (2E,6E)-farnesyl diphosphate + H2O = (+)-isoafricanol + diphosphate. Catalyzes the cyclization of farnesyl diphosphate (FPP) to isoafricanol. The chain is Isoafricanol synthase from Streptomyces violaceusniger (strain Tu 4113).